The chain runs to 1483 residues: Rho GTPase-activating protein 23 (1483 aa).

The segment at 15 to 34 (PEPRPPQLPLGPRDGCSSGR) is disordered. One can recognise a PDZ domain in the interval 71-155 (HCILKEEENG…TLELSIMPKD (85 aa)). Disordered regions lie at residues 212 to 276 (ISAL…PGSR) and 300 to 345 (AGER…GQEG). Residues 316–325 (SQDRLEDVTT) show a composition bias toward basic and acidic residues. Residues 331–342 (CSTSQDALSQLG) are compositionally biased toward polar residues. Phosphoserine occurs at positions 361 and 372. The segment at 385–407 (PSARTSACPSRDLTQAPPPSGLQ) is disordered. Serine 421 is modified (phosphoserine). Disordered stretches follow at residues 448 to 485 (SLAQSPASFPPEASEPPRVVRPDPSTRALEPPAEDHRD) and 508 to 527 (NLGFGDESPEPEARGERLGR). Phosphoserine occurs at positions 515, 579, 607, and 619. Threonine 652 bears the Phosphothreonine mark. Phosphoserine is present on residues serine 655, serine 658, and serine 673. Positions 684–804 (DIRREGWLYY…WIRAIRENSR (121 aa)) constitute a PH domain. The disordered stretch occupies residues 827-848 (KVSHSSGPKADSSPKGSRGLGG). Lysine 850 is covalently cross-linked (Glycyl lysine isopeptide (Lys-Gly) (interchain with G-Cter in SUMO2)). 4 disordered regions span residues 860–879 (RGLRTQEQPPGSKEDSVAAP), 1093–1150 (FSDD…SWVP), 1171–1361 (KRKK…GSRP), and 1419–1469 (ELGG…LQGL). Positions 901-1093 (IRLEECQPAT…TLIQHSDWFF (193 aa)) constitute a Rho-GAP domain. The segment covering 1099 to 1110 (KGERTPVDDKEP) has biased composition (basic and acidic residues). Composition is skewed to polar residues over residues 1133 to 1144 (GSDSTTCSSAKS) and 1236 to 1248 (SIVSGYSTLSTMD). Residues 1338-1351 (GSASSSSQESLRPP) are compositionally biased toward low complexity. The segment covering 1440–1457 (SGLSSLESTKARASSAAS) has biased composition (polar residues).

In terms of biological role, GTPase activator for the Rho-type GTPases by converting them to an inactive GDP-bound state. This chain is Rho GTPase-activating protein 23 (Arhgap23), found in Mus musculus (Mouse).